The primary structure comprises 479 residues: Cysteine--tRNA ligase (479 aa).

Position 28 (Cys-28) interacts with Zn(2+). Residues 30–40 (PTVYDHAHLGH) carry the 'HIGH' region motif. 3 residues coordinate Zn(2+): Cys-207, His-232, and Glu-236. The 'KMSKS' region motif lies at 264 to 268 (KMSKS). Lys-267 contributes to the ATP binding site.

This sequence belongs to the class-I aminoacyl-tRNA synthetase family. Zn(2+) serves as cofactor.

It is found in the cytoplasm. It carries out the reaction tRNA(Cys) + L-cysteine + ATP = L-cysteinyl-tRNA(Cys) + AMP + diphosphate. The protein is Cysteine--tRNA ligase of Methanococcus aeolicus (strain ATCC BAA-1280 / DSM 17508 / OCM 812 / Nankai-3).